The chain runs to 132 residues: Protein FasE (132 aa).

This chain is Protein FasE (fasE), found in Escherichia coli.